A 225-amino-acid chain; its full sequence is Ribosomal RNA small subunit methyltransferase G (225 aa).

S-adenosyl-L-methionine-binding positions include Gly-71, Leu-76, 121-122, and Arg-139; that span reads AE. The tract at residues 204–225 is disordered; the sequence is VVEARRATPSNGRGRPGRSSRR.

It belongs to the methyltransferase superfamily. RNA methyltransferase RsmG family.

The protein localises to the cytoplasm. Specifically methylates the N7 position of guanine in position 518 of 16S rRNA. In Mycobacterium sp. (strain JLS), this protein is Ribosomal RNA small subunit methyltransferase G.